We begin with the raw amino-acid sequence, 220 residues long: MSFKDFDAPKYKYKRKSLVEILKNEGIKSQKVLDAILKVPRHIFVPSEYLDLAYENEALPIGYEQTISQPYIVALMTEALDLKGDEKVLEIGTGSGYQTAILAELAKEVYTIERIRELSEEAKKRIKLLGYSNVYFKVGDGTLGWEEFSPYDRIIVTAASYDIPNPLKEQLKDGGVMVIPIGGRDFQYLYKITKKNGNFYRENLGGVRFVPLKGEYGWKD.

Serine 68 is a catalytic residue.

The protein belongs to the methyltransferase superfamily. L-isoaspartyl/D-aspartyl protein methyltransferase family.

It localises to the cytoplasm. It catalyses the reaction [protein]-L-isoaspartate + S-adenosyl-L-methionine = [protein]-L-isoaspartate alpha-methyl ester + S-adenosyl-L-homocysteine. Its function is as follows. Catalyzes the methyl esterification of L-isoaspartyl residues in peptides and proteins that result from spontaneous decomposition of normal L-aspartyl and L-asparaginyl residues. It plays a role in the repair and/or degradation of damaged proteins. The sequence is that of Protein-L-isoaspartate O-methyltransferase from Dictyoglomus turgidum (strain DSM 6724 / Z-1310).